The following is a 507-amino-acid chain: F-box only protein 31 (507 aa).

The interval 19-42 (RQQRRGPAETAAADSEADTDPEEE) is disordered. S33 is subject to Phosphoserine. Acidic residues predominate over residues 33–42 (SEADTDPEEE). T37 bears the Phosphothreonine mark. The D box motif lies at 50–55 (RCSLLE). Residues 50–96 (RCSLLELPPELLVEIFASLPGTDLPSLAQVCSRFRRILHTDTIWRRR) enclose the F-box domain. Zn(2+)-binding residues include C192, H200, C216, and H222. Residue S264 is modified to Phosphoserine; by ATM. A DDL motif motif is present at residues 283-285 (DDL). The interval 366–417 (EQEAGEGAAPPREPSAKAADGPPAKDGKEPGGGAEAAEQSASSGQGQPFVLP) is disordered. The segment covering 400–412 (EAAEQSASSGQGQ) has biased composition (low complexity). S448 is modified (phosphoserine).

This sequence belongs to the FBXO31 family. Part of a SCF (SKP1-cullin-F-box) protein ligase complex SCF(FBXO31) composed of CUL1, SKP1, RBX1 and FBXO31. Interacts (when phosphorylated at Ser-33) with CDC20, promoting ubiquitination by the APC/C complex. Phosphorylation at Ser-264 by ATM following gamma-irradiation results in its stabilization. Phosphorylation at Ser-448 in absence of stress promotes its ubiquitination and degradation by the SCF(FBXO46) complex. Phosphorylation at Ser-33 by AKT1 promotes association with CDC20 and ubiquitination by the APC/C complex. In terms of processing, ubiquitinated by the SCF(FBXO46) complex in absence of stress, promoting its degradation. Ubiquitinated by the APC/C complex following phosphorylation at Ser-33, leading to its degradation by the proteasome.

It is found in the cytoplasm. It localises to the cytoskeleton. The protein resides in the microtubule organizing center. Its subcellular location is the centrosome. Its pathway is protein modification; protein ubiquitination. Substrate-recognition component of the SCF(FBXO31) protein ligase complex, which specifically mediates the ubiquitination of proteins amidated at their C-terminus in response to oxidative stress, leading to their degradation by the proteasome. FBXO31 specifically recognizes and binds C-terminal peptides bearing an amide: C-terminal amidation in response to oxidative stress takes place following protein fragmentation. The SCF(FBXO31) also plays a role in G1 arrest following DNA damage by mediating ubiquitination of phosphorylated cyclin-D1 (CCND1), promoting its degradation by the proteasome, resulting in G1 arrest. The SCF(FBXO31) complex is however not a major regulator of CCND1 stability during the G1/S transition. In response to genotoxic stress, the SCF(FBXO31) complex directs ubiquitination and degradation of phosphorylated MDM2, thereby promoting p53/TP53-mediated DNA damage response. SCF(FBXO31) complex is required for genomic integrity by catalyzing ubiquitination and degradation of cyclin-A (CCNA1 and/or CCNA2) during the G1 phase. In response to genotoxic stress, the SCF(FBXO31) complex directs ubiquitination and degradation of phosphorylated FBXO46 and MAP2K6. SCF(FBXO31) complex promotes ubiquitination and degradation of CDT1 during the G2 phase to prevent re-replication. The SCF(FBXO31) complex also mediates ubiquitination and degradation of DUSP6, OGT and PARD6A. The sequence is that of F-box only protein 31 from Mus musculus (Mouse).